We begin with the raw amino-acid sequence, 279 residues long: Probable endonuclease 4 (279 aa).

9 residues coordinate Zn(2+): His-67, His-107, Glu-144, Asp-177, His-180, His-214, Asp-227, His-229, and Glu-259.

It belongs to the AP endonuclease 2 family. The cofactor is Zn(2+).

It catalyses the reaction Endonucleolytic cleavage to 5'-phosphooligonucleotide end-products.. Functionally, endonuclease IV plays a role in DNA repair. It cleaves phosphodiester bonds at apurinic or apyrimidinic (AP) sites, generating a 3'-hydroxyl group and a 5'-terminal sugar phosphate. The polypeptide is Probable endonuclease 4 (Sulfurihydrogenibium sp. (strain YO3AOP1)).